The chain runs to 845 residues: Beta-mannosidase B (845 aa).

The N-linked (GlcNAc...) asparagine glycan is linked to N252. E432 serves as the catalytic Proton donor. 2 N-linked (GlcNAc...) asparagine glycosylation sites follow: N717 and N723.

Belongs to the glycosyl hydrolase 2 family. Beta-mannosidase B subfamily.

The catalysed reaction is Hydrolysis of terminal, non-reducing beta-D-mannose residues in beta-D-mannosides.. It functions in the pathway glycan metabolism; N-glycan degradation. Functionally, exoglycosidase that cleaves the single beta-linked mannose residue from the non-reducing end of beta-mannosidic oligosaccharides of various complexity and length. Prefers mannobiose over mannotriose and has no activity against polymeric mannan. Is also severely restricted by galactosyl substitutions at the +1 subsite. The chain is Beta-mannosidase B (mndB) from Aspergillus fumigatus (strain ATCC MYA-4609 / CBS 101355 / FGSC A1100 / Af293) (Neosartorya fumigata).